A 318-amino-acid polypeptide reads, in one-letter code: uncharacterized protein (318 aa).

It belongs to the NAD(P)-dependent epimerase/dehydratase family.

This is an uncharacterized protein from Staphylococcus haemolyticus (strain JCSC1435).